A 129-amino-acid polypeptide reads, in one-letter code: Small ribosomal subunit protein uS8 (129 aa).

Belongs to the universal ribosomal protein uS8 family. In terms of assembly, part of the 30S ribosomal subunit.

Functionally, one of the primary rRNA binding proteins, it binds directly to 16S rRNA central domain where it helps coordinate assembly of the platform of the 30S subunit. The sequence is that of Small ribosomal subunit protein uS8 from Picrophilus torridus (strain ATCC 700027 / DSM 9790 / JCM 10055 / NBRC 100828 / KAW 2/3).